Consider the following 566-residue polypeptide: Proline--tRNA ligase 1 (566 aa).

Belongs to the class-II aminoacyl-tRNA synthetase family. ProS type 1 subfamily. As to quaternary structure, homodimer.

Its subcellular location is the cytoplasm. The enzyme catalyses tRNA(Pro) + L-proline + ATP = L-prolyl-tRNA(Pro) + AMP + diphosphate. Its function is as follows. Catalyzes the attachment of proline to tRNA(Pro) in a two-step reaction: proline is first activated by ATP to form Pro-AMP and then transferred to the acceptor end of tRNA(Pro). As ProRS can inadvertently accommodate and process non-cognate amino acids such as alanine and cysteine, to avoid such errors it has two additional distinct editing activities against alanine. One activity is designated as 'pretransfer' editing and involves the tRNA(Pro)-independent hydrolysis of activated Ala-AMP. The other activity is designated 'posttransfer' editing and involves deacylation of mischarged Ala-tRNA(Pro). The misacylated Cys-tRNA(Pro) is not edited by ProRS. This is Proline--tRNA ligase 1 from Bacillus thuringiensis subsp. konkukian (strain 97-27).